The chain runs to 234 residues: ATP synthase subunit a 1 (234 aa).

The next 5 helical transmembrane spans lie at 20–40 (ETVVTTWLIMLVLVVASILLT), 76–96 (LLPLIGTFWIFLPVANLLGVI), 105–125 (DLSVTAALALVVFFAVHAYGV), 162–184 (LFGNIMSLEMAALLILLVAGFLA), and 195–215 (EALVQAYIFGMLALIYVAGAM).

The protein belongs to the ATPase A chain family. As to quaternary structure, F-type ATPases have 2 components, CF(1) - the catalytic core - and CF(0) - the membrane proton channel. CF(1) has five subunits: alpha(3), beta(3), gamma(1), delta(1), epsilon(1). CF(0) has three main subunits: a(1), b(2) and c(9-12). The alpha and beta chains form an alternating ring which encloses part of the gamma chain. CF(1) is attached to CF(0) by a central stalk formed by the gamma and epsilon chains, while a peripheral stalk is formed by the delta and b chains.

It localises to the cell inner membrane. Key component of the proton channel; it plays a direct role in the translocation of protons across the membrane. In Hahella chejuensis (strain KCTC 2396), this protein is ATP synthase subunit a 1.